The chain runs to 520 residues: Maturase K (520 aa).

It belongs to the intron maturase 2 family. MatK subfamily.

Its subcellular location is the plastid. The protein localises to the chloroplast. Usually encoded in the trnK tRNA gene intron. Probably assists in splicing its own and other chloroplast group II introns. The sequence is that of Maturase K from Linum perenne (Perennial flax).